A 137-amino-acid polypeptide reads, in one-letter code: Large ribosomal subunit protein uL16 (137 aa).

Belongs to the universal ribosomal protein uL16 family. As to quaternary structure, part of the 50S ribosomal subunit.

Functionally, binds 23S rRNA and is also seen to make contacts with the A and possibly P site tRNAs. In Bradyrhizobium sp. (strain BTAi1 / ATCC BAA-1182), this protein is Large ribosomal subunit protein uL16.